Consider the following 227-residue polypeptide: Cytidylate kinase (227 aa).

Residue G12 to T20 coordinates ATP.

The protein belongs to the cytidylate kinase family. Type 1 subfamily.

Its subcellular location is the cytoplasm. It catalyses the reaction CMP + ATP = CDP + ADP. The enzyme catalyses dCMP + ATP = dCDP + ADP. The protein is Cytidylate kinase of Shigella sonnei (strain Ss046).